The sequence spans 702 residues: Protein-glucosylgalactosylhydroxylysine glucosidase (702 aa).

310–311 (WD) is a binding site for substrate. Glutamate 440 serves as the catalytic Proton donor. 508–509 (KQ) is a substrate binding site.

It belongs to the glycosyl hydrolase 65 family.

It catalyses the reaction (5R)-5-O-[alpha-D-glucosyl-(1-&gt;2)-beta-D-galactosyl]-5-hydroxy-L-lysyl-[collagen] + H2O = (5R)-5-O-(beta-D-galactosyl)-5-hydroxy-L-lysyl-[collagen] + D-glucose. In terms of biological role, catalyzes the hydrolysis of glucose from the disaccharide unit linked to hydroxylysine residues of collagen and collagen-like proteins. The polypeptide is Protein-glucosylgalactosylhydroxylysine glucosidase (Gallus gallus (Chicken)).